The primary structure comprises 300 residues: Protoheme IX farnesyltransferase 1 (300 aa).

A run of 8 helical transmembrane segments spans residues 28–48, 50–70, 106–126, 150–170, 176–196, 222–242, 243–263, and 280–300; these read VVAL…PGAV, VQPL…AAAY, AMAI…TAWL, IVVG…AITG, ALLL…ALAI, CIML…LVGM, CGPL…YKAW, and FSIY…YLWS.

Belongs to the UbiA prenyltransferase family. Protoheme IX farnesyltransferase subfamily.

It localises to the cell inner membrane. The catalysed reaction is heme b + (2E,6E)-farnesyl diphosphate + H2O = Fe(II)-heme o + diphosphate. The protein operates within porphyrin-containing compound metabolism; heme O biosynthesis; heme O from protoheme: step 1/1. Its function is as follows. Converts heme B (protoheme IX) to heme O by substitution of the vinyl group on carbon 2 of heme B porphyrin ring with a hydroxyethyl farnesyl side group. The sequence is that of Protoheme IX farnesyltransferase 1 from Shewanella loihica (strain ATCC BAA-1088 / PV-4).